The sequence spans 102 residues: Small ribosomal subunit protein uS10 (102 aa).

It belongs to the universal ribosomal protein uS10 family. Part of the 30S ribosomal subunit.

Involved in the binding of tRNA to the ribosomes. The polypeptide is Small ribosomal subunit protein uS10 (Bifidobacterium longum (strain DJO10A)).